The primary structure comprises 166 residues: Urease accessory protein UreE 2 (166 aa).

Residues 133 to 156 (QPEHGAYGGGHHHSRAGEEDFNYP) are disordered.

Belongs to the UreE family.

It is found in the cytoplasm. Functionally, involved in urease metallocenter assembly. Binds nickel. Probably functions as a nickel donor during metallocenter assembly. This Pseudomonas syringae pv. tomato (strain ATCC BAA-871 / DC3000) protein is Urease accessory protein UreE 2.